The primary structure comprises 97 residues: Small integral membrane protein 8 (97 aa).

The tract at residues 1–24 is disordered; the sequence is MSSAPEPPTFKKEPPKEKDFQSPG. Residues 9 to 20 show a composition bias toward basic and acidic residues; that stretch reads TFKKEPPKEKDF. The helical transmembrane segment at 48 to 67 threads the bilayer; sequence PVMAFGLVTLSLCVAYIGYL.

Belongs to the SMIM8 family.

Its subcellular location is the membrane. This chain is Small integral membrane protein 8 (SMIM8), found in Pongo abelii (Sumatran orangutan).